The following is a 274-amino-acid chain: NH(3)-dependent NAD(+) synthetase (274 aa).

27–34 (GLSGGIDS) provides a ligand contact to ATP. Position 33 (Asp33) interacts with Mg(2+). Residue Arg121 coordinates deamido-NAD(+). Thr141 lines the ATP pocket. Glu146 lines the Mg(2+) pocket. ATP-binding residues include Lys170 and Ser192.

The protein belongs to the NAD synthetase family. Homodimer.

It catalyses the reaction deamido-NAD(+) + NH4(+) + ATP = AMP + diphosphate + NAD(+) + H(+). The protein operates within cofactor biosynthesis; NAD(+) biosynthesis; NAD(+) from deamido-NAD(+) (ammonia route): step 1/1. Its function is as follows. Catalyzes the ATP-dependent amidation of deamido-NAD to form NAD. Uses ammonia as a nitrogen source. This Helicobacter hepaticus (strain ATCC 51449 / 3B1) protein is NH(3)-dependent NAD(+) synthetase.